The sequence spans 64 residues: U-myrmeciitoxin(01)-Mg4b (64 aa).

The N-terminal stretch at 1–25 (MGKIFFFVLMIAIIGSTFLIEEALG) is a signal peptide.

The protein belongs to the ant myrmeciitoxin-01 family. In terms of assembly, homodimer; disulfide-linked. Post-translationally, contains 2 intrachain disulfide bonds (per chain) and 1 interchain disulfide bond. In terms of tissue distribution, expressed by the venom gland.

The protein localises to the secreted. Its function is as follows. May have antimicrobial properties, like most ant linear peptides. This is U-myrmeciitoxin(01)-Mg4b from Myrmecia gulosa (Red bulldog ant).